A 188-amino-acid polypeptide reads, in one-letter code: Ribosome maturation factor RimM (188 aa).

The PRC barrel domain occupies 93-175; the sequence is QDEFYFTDLI…EIEVQGDLSD (83 aa).

The protein belongs to the RimM family. In terms of assembly, binds ribosomal protein uS19.

It localises to the cytoplasm. Its function is as follows. An accessory protein needed during the final step in the assembly of 30S ribosomal subunit, possibly for assembly of the head region. Essential for efficient processing of 16S rRNA. May be needed both before and after RbfA during the maturation of 16S rRNA. It has affinity for free ribosomal 30S subunits but not for 70S ribosomes. The chain is Ribosome maturation factor RimM from Gluconacetobacter diazotrophicus (strain ATCC 49037 / DSM 5601 / CCUG 37298 / CIP 103539 / LMG 7603 / PAl5).